A 274-amino-acid polypeptide reads, in one-letter code: Syntaxin-12 (274 aa).

Disordered stretches follow at residues 1-20 (MSYGPLDMYRNPGPSGPQPR) and 128-147 (EKESIARARAGSRLSAEDRQ). The residue at position 2 (serine 2) is an N-acetylserine. The Cytoplasmic portion of the chain corresponds to 2 to 250 (SYGPLDMYRN…AYYQKKSRKK (249 aa)). Residues 33–130 (IQRISQATAQ…QRKVSEKEKE (98 aa)) are a coiled coil. Phosphoserine occurs at positions 139, 142, 218, and 225. The t-SNARE coiled-coil homology domain maps to 178–240 (LELIKERETA…ERATDQLQRA (63 aa)). Residues 251–271 (MCILVLVLSVIVTVLVVVIWV) traverse the membrane as a helical; Anchor for type IV membrane protein segment. The Vesicular portion of the chain corresponds to 272–274 (ASK).

Belongs to the syntaxin family. As to quaternary structure, associates with the BLOC-1 complex. Interacts with BLOC1S6. Interacts with NAPA and SNAP23. Identified in a complex containing STX6, STX12, VAMP4 and VTI1A. Interacts with GRIPAP1. Forms a complex with GRIP1, GRIA2 and NSG1; controls the intracellular fate of AMPAR and the endosomal sorting of the GRIA2 subunit toward recycling and membrane targeting. Interacts with NSG1. Interacts with TPC1. Interacts (via N-terminus) with VPS13B.

It is found in the endosome membrane. Its subcellular location is the golgi apparatus membrane. The protein resides in the endomembrane system. The protein localises to the early endosome membrane. It localises to the recycling endosome membrane. Its function is as follows. SNARE promoting fusion of transport vesicles with target membranes. Together with SNARE STX6, promotes movement of vesicles from endosomes to the cell membrane, and may therefore function in the endocytic recycling pathway. Through complex formation with GRIP1, GRIA2 and NSG1 controls the intracellular fate of AMPAR and the endosomal sorting of the GRIA2 subunit toward recycling and membrane targeting. This chain is Syntaxin-12 (Stx12), found in Mus musculus (Mouse).